Reading from the N-terminus, the 109-residue chain is Flagellar hook-basal body complex protein FliE (109 aa).

Belongs to the FliE family.

It localises to the bacterial flagellum basal body. This is Flagellar hook-basal body complex protein FliE from Pseudomonas syringae pv. tomato (strain ATCC BAA-871 / DC3000).